A 929-amino-acid polypeptide reads, in one-letter code: Synaptopodin (929 aa).

An N-acetylmethionine modification is found at Met1. Residues 1-12 show a composition bias toward pro residues; it reads MLGPHLPPPPLA. The segment at 1–260 is disordered; sequence MLGPHLPPPP…EASLLRHLEK (260 aa). Basic and acidic residues-rich tracts occupy residues 60–69 and 91–110; these read GVSRSGDDSA and SREE…DWDV. Ser140 is modified (phosphoserine). Basic and acidic residues predominate over residues 142–151; that stretch reads TEKDLKEAKA. Positions 152-170 are enriched in polar residues; it reads RSQQIAAQLTTPPSSNSRG. Position 207 is a phosphoserine (Ser207). The span at 224 to 234 shows a compositional bias: pro residues; sequence EPGPPRHPSPQ. Residue Ser263 is modified to Phosphoserine. The tract at residues 285–389 is disordered; that stretch reads GLHLSQNREA…TLCADGQPQA (105 aa). The segment covering 317–332 has biased composition (low complexity); it reads LASPSATLTTPTSNSS. A glycan (N-linked (GlcNAc...) asparagine) is linked at Asn330. A compositionally biased stretch (polar residues) spans 333–379; that stretch reads HNPPATDVNQNPPATVVPQSLPLSSIQQNSSEAQLPSNGTGPASKPS. Residues Ser501 and Ser525 each carry the phosphoserine modification. The segment at 509 to 558 is disordered; sequence FGEKAPAPQPPSLPDRSPRPQRHIMSRSPMVERRMMGQRSPASERRPLGN. The residue at position 560 (Thr560) is a Phosphothreonine. Residues 562 to 565 carry the PPxY motif motif; sequence PPTY. A Phosphoserine modification is found at Ser580. The PPxY motif motif lies at 581–584; that stretch reads PPSY. Disordered regions lie at residues 589-610 and 630-726; these read PSSD…KTGI and KPKV…KGAE. Basic and acidic residues predominate over residues 646–656; sequence ADEKRRQRDQG. 3 positions are modified to phosphoserine: Ser685, Ser702, and Tyr738. Low complexity predominate over residues 685–698; that stretch reads SPAAAEEVVPEWAS. The interval 740–763 is disordered; sequence IESSSHTPELARCPSPTMSLPSSW. Thr746 is modified (phosphothreonine). Phosphoserine is present on residues Ser754, Ser758, and Ser779. Position 783 is a phosphothreonine (Thr783). A phosphoserine mark is found at Pro784, Thr804, Arg812, Lys826, Ser833, Ser854, Pro871, and Pro894. The segment covering 826 to 839 has biased composition (low complexity); it reads KVSPRAASPAKPSS. The disordered stretch occupies residues 826–916; sequence KVSPRAASPA…RPSFSTRNAG (91 aa). Over residues 866-880 the composition is skewed to polar residues; that stretch reads GLYTSPGQDSLQPTA.

This sequence belongs to the synaptopodin family. In terms of assembly, interacts with BAIAP1. Interacts with actin. Interacts (via PPxY motifs) with WWC1 (via WW domains). Post-translationally, O-glycosylated. As to expression, expressed in cerebral cortex.

The protein localises to the cytoplasm. It is found in the cytoskeleton. The protein resides in the cell junction. It localises to the tight junction. Its subcellular location is the perikaryon. The protein localises to the cell projection. It is found in the dendritic spine. The protein resides in the postsynaptic density. It localises to the synapse. Its subcellular location is the cytosol. Functionally, actin-associated protein that may play a role in modulating actin-based shape and motility of dendritic spines and renal podocyte foot processes. Seems to be essential for the formation of spine apparatuses in spines of telencephalic neurons, which is involved in synaptic plasticity. The chain is Synaptopodin (SYNPO) from Homo sapiens (Human).